A 220-amino-acid chain; its full sequence is Membrane steroid-binding protein 1 (220 aa).

Residues 22–42 traverse the membrane as a helical segment; that stretch reads VVFFTALALAFAIYQVISGWF. The 98-residue stretch at 74 to 171 folds into the Cytochrome b5 heme-binding domain; it reads EITEEELKQY…SKYAKVGTVK (98 aa). The steroid-binding stretch occupies residues 74–171; that stretch reads EITEEELKQY…SKYAKVGTVK (98 aa). The segment at 174-220 is disordered; it reads GSEPETASVSEPTENVEQDAHVTTTPGKTVVDKSDDAPAETVLKKEE. Residues 178–200 are compositionally biased toward polar residues; that stretch reads ETASVSEPTENVEQDAHVTTTPG. The span at 203 to 220 shows a compositional bias: basic and acidic residues; it reads VVDKSDDAPAETVLKKEE.

The protein belongs to the cytochrome b5 family. MAPR subfamily. Interacts with BAK1 (via extracellular region). Expressed in cotyledons, stems, roots, leaves, flower and silique stalks, pistils and stigmas, but not in anthers.

Its subcellular location is the cell membrane. The protein localises to the endosome membrane. MSBP1 can bind to multiple steroid compounds with different affinities. Negatively regulates cell elongation and brassinosteroid signaling. May act as a coreceptor with BAK1 and enhances its endocytosis. This is Membrane steroid-binding protein 1 (MSBP1) from Arabidopsis thaliana (Mouse-ear cress).